We begin with the raw amino-acid sequence, 598 residues long: (-)-endo-fenchol synthase, chloroplastic (598 aa).

The transit peptide at 1–34 (MWSTISISMNVAILKKPLNFLHNSNNKASNPRCV) directs the protein to the chloroplast. Mg(2+) contacts are provided by Asp351, Asp355, Asp495, Thr499, and Glu503. The short motif at 351–355 (DDVYD) is the DDXXD motif element.

It belongs to the terpene synthase family. Mg(2+) is required as a cofactor. Mn(2+) serves as cofactor.

It is found in the plastid. The protein localises to the chloroplast. It catalyses the reaction (2E)-geranyl diphosphate + H2O = (1S,2S,4R)-endo-fenchol + diphosphate. It participates in secondary metabolite biosynthesis; terpenoid biosynthesis. Its function is as follows. Monoterpene synthase that catalyzes the formation of fenchol from geranyl diphosphate. The polypeptide is (-)-endo-fenchol synthase, chloroplastic (FES) (Ocimum basilicum (Sweet basil)).